The sequence spans 319 residues: Ribonuclease Z (319 aa).

Positions 62, 64, 66, 67, 139, 209, and 268 each coordinate Zn(2+). The Proton acceptor role is filled by aspartate 66.

This sequence belongs to the RNase Z family. As to quaternary structure, homodimer. It depends on Zn(2+) as a cofactor.

It catalyses the reaction Endonucleolytic cleavage of RNA, removing extra 3' nucleotides from tRNA precursor, generating 3' termini of tRNAs. A 3'-hydroxy group is left at the tRNA terminus and a 5'-phosphoryl group is left at the trailer molecule.. In terms of biological role, zinc phosphodiesterase, which displays some tRNA 3'-processing endonuclease activity. Probably involved in tRNA maturation, by removing a 3'-trailer from precursor tRNA. In Pseudomonas putida (strain ATCC 47054 / DSM 6125 / CFBP 8728 / NCIMB 11950 / KT2440), this protein is Ribonuclease Z.